The following is a 78-amino-acid chain: Conotoxin TsMSGL-11 (78 aa).

The first 24 residues, 1-24 (MSGLGIMVLTLLLLVFMATSHQDA), serve as a signal peptide directing secretion. Residues 25 to 44 (GEKQATQRDAINVRRRRSIT) constitute a propeptide that is removed on maturation. Disulfide bonds link cysteine 51–cysteine 63, cysteine 55–cysteine 72, and cysteine 62–cysteine 76. Phenylalanine 77 is modified (phenylalanine amide).

Belongs to the conotoxin O3 superfamily. Expressed by the venom duct.

Its subcellular location is the secreted. The polypeptide is Conotoxin TsMSGL-11 (Conus tessulatus (Tessellate cone)).